Reading from the N-terminus, the 443-residue chain is Probable glycine dehydrogenase (decarboxylating) subunit 1 (443 aa).

Belongs to the GcvP family. N-terminal subunit subfamily. In terms of assembly, the glycine cleavage system is composed of four proteins: P, T, L and H. In this organism, the P 'protein' is a heterodimer of two subunits.

The catalysed reaction is N(6)-[(R)-lipoyl]-L-lysyl-[glycine-cleavage complex H protein] + glycine + H(+) = N(6)-[(R)-S(8)-aminomethyldihydrolipoyl]-L-lysyl-[glycine-cleavage complex H protein] + CO2. In terms of biological role, the glycine cleavage system catalyzes the degradation of glycine. The P protein binds the alpha-amino group of glycine through its pyridoxal phosphate cofactor; CO(2) is released and the remaining methylamine moiety is then transferred to the lipoamide cofactor of the H protein. The chain is Probable glycine dehydrogenase (decarboxylating) subunit 1 from Desulfovibrio desulfuricans (strain ATCC 27774 / DSM 6949 / MB).